A 147-amino-acid polypeptide reads, in one-letter code: Ribosome-binding factor A (147 aa).

Residues 126–147 (LKKNAQPAGDAHPYKDDDAMND) are disordered. Over residues 137 to 147 (HPYKDDDAMND) the composition is skewed to basic and acidic residues.

This sequence belongs to the RbfA family. Monomer. Binds 30S ribosomal subunits, but not 50S ribosomal subunits or 70S ribosomes.

It is found in the cytoplasm. In terms of biological role, one of several proteins that assist in the late maturation steps of the functional core of the 30S ribosomal subunit. Associates with free 30S ribosomal subunits (but not with 30S subunits that are part of 70S ribosomes or polysomes). Required for efficient processing of 16S rRNA. May interact with the 5'-terminal helix region of 16S rRNA. The chain is Ribosome-binding factor A from Corynebacterium diphtheriae (strain ATCC 700971 / NCTC 13129 / Biotype gravis).